A 344-amino-acid chain; its full sequence is Cell cycle control protein 50C (344 aa).

The Cytoplasmic segment spans residues 1–34 (MEETPQHCLSRLPDNSALKQQELPAHRLYFTARR). Residues 35–55 (VLFVFFTTGIFCLCMGIILIL) form a helical membrane-spanning segment. Residues 56 to 306 (SARSTQEIEI…STLTWCGGNS (251 aa)) are Extracellular-facing. N-linked (GlcNAc...) asparagine glycosylation is found at Asn66 and Asn261. The chain crosses the membrane as a helical span at residues 307–327 (LFLGLAYTVTGAITWLASFTM). Residues 328–344 (MAIHITLKNKQMSFFHQ) are Cytoplasmic-facing.

The protein belongs to the CDC50/LEM3 family. In terms of tissue distribution, specifically expressed in testis.

It localises to the membrane. In Macaca fascicularis (Crab-eating macaque), this protein is Cell cycle control protein 50C (TMEM30C).